Reading from the N-terminus, the 292-residue chain is MINWVRVALCGMLLVMVSLVLMPVQILCLWLDLKPRRWLPRHWHRVACLLLGLRVRVHGELDRRRPLLLSANHVSWKDILVLSSVADVVFVAKSDVKSWPIFGLLARLQASVFVEREQKRTTGHQVNDIGRRLADGEIVVLFPEGTTSDGNRLLDIKTSLFGAAASAVPQSPTGVVHVQPLAISYTGIHGMPMGRYHRPIAAWPGDIGLVPHLLGVLREGALEVDVDFGEAVDYDRHANRKEVSRLIGQRIRKMLSDRLRGRSRSAAKGEPAPACSAAPDIPSDAQRSRLAP.

A helical transmembrane segment spans residues 11 to 31; sequence GMLLVMVSLVLMPVQILCLWL. The interval 258-292 is disordered; sequence RLRGRSRSAAKGEPAPACSAAPDIPSDAQRSRLAP.

It belongs to the 1-acyl-sn-glycerol-3-phosphate acyltransferase family. OlsA subfamily.

Its subcellular location is the membrane. The enzyme catalyses a lyso-ornithine lipid + a fatty acyl-[ACP] = an N(2)-[(3R)-3-(acyloxy)acyl]-L-ornithine lipid + holo-[ACP]. The protein operates within lipid metabolism. Catalyzes the second step in the formation of ornithine lipids, which are phosphorus-free membrane lipids. Uses acyl-acyl carrier protein (acyl-AcpP) as an acyl donor and converts lyso-ornithine lipid (LOL) into ornithine lipid (OL). In Rhizobium meliloti (strain 1021) (Ensifer meliloti), this protein is Lyso-ornithine lipid O-acyltransferase.